Reading from the N-terminus, the 173-residue chain is Crossover junction endodeoxyribonuclease RuvC (173 aa).

Catalysis depends on residues D8, E67, and D139. Positions 8, 67, and 139 each coordinate Mg(2+).

It belongs to the RuvC family. As to quaternary structure, homodimer which binds Holliday junction (HJ) DNA. The HJ becomes 2-fold symmetrical on binding to RuvC with unstacked arms; it has a different conformation from HJ DNA in complex with RuvA. In the full resolvosome a probable DNA-RuvA(4)-RuvB(12)-RuvC(2) complex forms which resolves the HJ. It depends on Mg(2+) as a cofactor.

Its subcellular location is the cytoplasm. It carries out the reaction Endonucleolytic cleavage at a junction such as a reciprocal single-stranded crossover between two homologous DNA duplexes (Holliday junction).. In terms of biological role, the RuvA-RuvB-RuvC complex processes Holliday junction (HJ) DNA during genetic recombination and DNA repair. Endonuclease that resolves HJ intermediates. Cleaves cruciform DNA by making single-stranded nicks across the HJ at symmetrical positions within the homologous arms, yielding a 5'-phosphate and a 3'-hydroxyl group; requires a central core of homology in the junction. The consensus cleavage sequence is 5'-(A/T)TT(C/G)-3'. Cleavage occurs on the 3'-side of the TT dinucleotide at the point of strand exchange. HJ branch migration catalyzed by RuvA-RuvB allows RuvC to scan DNA until it finds its consensus sequence, where it cleaves and resolves the cruciform DNA. This Yersinia enterocolitica serotype O:8 / biotype 1B (strain NCTC 13174 / 8081) protein is Crossover junction endodeoxyribonuclease RuvC.